A 130-amino-acid polypeptide reads, in one-letter code: Holo-[acyl-carrier-protein] synthase (130 aa).

The Mg(2+) site is built by Asp-9 and Glu-58.

Belongs to the P-Pant transferase superfamily. AcpS family. The cofactor is Mg(2+).

It is found in the cytoplasm. The catalysed reaction is apo-[ACP] + CoA = holo-[ACP] + adenosine 3',5'-bisphosphate + H(+). Functionally, transfers the 4'-phosphopantetheine moiety from coenzyme A to a Ser of acyl-carrier-protein. This is Holo-[acyl-carrier-protein] synthase from Mycobacterium leprae (strain Br4923).